The primary structure comprises 453 residues: Regulatory protein opaque-2 (453 aa).

The tract at residues 145–243 (SSVVTSDQRS…SNRESARRSR (99 aa)) is disordered. Polar residues predominate over residues 146 to 175 (SVVTSDQRSQGSNNHTGGSSIRNNPVQNKL). Residues 207-216 (PSDEDMDGEV) are compositionally biased toward acidic residues. Basic and acidic residues predominate over residues 224–240 (PTEERVRKKESNRESAR). The 64-residue stretch at 225–288 (TEERVRKKES…NDANVDNRVL (64 aa)) folds into the bZIP domain. Residues 228-251 (RVRKKESNRESARRSRYRKAAHLK) form a basic motif region. The tract at residues 253 to 274 (LEDQVAQLKAENSCLLRRIAAL) is leucine-zipper.

Belongs to the bZIP family. Interacts with the Dof zinc finger protein PBF. Seed endosperm.

The protein localises to the nucleus. Functionally, involved in the regulation of the endosperm-specific production of albumin b-32 and other zein proteins. It is a trans-acting transcriptional activator that binds to the consensus sequence 5'-GATGAYRTGR-3'. The chain is Regulatory protein opaque-2 (O2) from Zea mays (Maize).